The following is a 433-amino-acid chain: Glucose-1-phosphate adenylyltransferase (433 aa).

Residues tyrosine 117, glycine 182, 197–198 (EK), and serine 215 each bind alpha-D-glucose 1-phosphate.

The protein belongs to the bacterial/plant glucose-1-phosphate adenylyltransferase family. In terms of assembly, homotetramer.

It catalyses the reaction alpha-D-glucose 1-phosphate + ATP + H(+) = ADP-alpha-D-glucose + diphosphate. The protein operates within glycan biosynthesis; glycogen biosynthesis. Its function is as follows. Involved in the biosynthesis of ADP-glucose, a building block required for the elongation reactions to produce glycogen. Catalyzes the reaction between ATP and alpha-D-glucose 1-phosphate (G1P) to produce pyrophosphate and ADP-Glc. In Nitrosomonas europaea (strain ATCC 19718 / CIP 103999 / KCTC 2705 / NBRC 14298), this protein is Glucose-1-phosphate adenylyltransferase.